The sequence spans 152 residues: Xanthine-guanine phosphoribosyltransferase (152 aa).

Residues R37–G38, R69, and D88–T96 contribute to the 5-phospho-alpha-D-ribose 1-diphosphate site. A GMP-binding site is contributed by R69. D89 lines the Mg(2+) pocket. Residues D92 and I135 each coordinate guanine. Xanthine contacts are provided by D92 and I135. GMP is bound by residues D92–T96 and W134–I135.

The protein belongs to the purine/pyrimidine phosphoribosyltransferase family. XGPT subfamily. In terms of assembly, homotetramer. Mg(2+) serves as cofactor.

It is found in the cell inner membrane. The catalysed reaction is GMP + diphosphate = guanine + 5-phospho-alpha-D-ribose 1-diphosphate. It carries out the reaction XMP + diphosphate = xanthine + 5-phospho-alpha-D-ribose 1-diphosphate. It catalyses the reaction IMP + diphosphate = hypoxanthine + 5-phospho-alpha-D-ribose 1-diphosphate. It participates in purine metabolism; GMP biosynthesis via salvage pathway; GMP from guanine: step 1/1. It functions in the pathway purine metabolism; XMP biosynthesis via salvage pathway; XMP from xanthine: step 1/1. Functionally, purine salvage pathway enzyme that catalyzes the transfer of the ribosyl-5-phosphate group from 5-phospho-alpha-D-ribose 1-diphosphate (PRPP) to the N9 position of the 6-oxopurines guanine and xanthine to form the corresponding ribonucleotides GMP (guanosine 5'-monophosphate) and XMP (xanthosine 5'-monophosphate), with the release of PPi. To a lesser extent, also acts on hypoxanthine. This Citrobacter koseri (strain ATCC BAA-895 / CDC 4225-83 / SGSC4696) protein is Xanthine-guanine phosphoribosyltransferase.